A 330-amino-acid polypeptide reads, in one-letter code: Peptide transport system ATP-binding protein SapD (330 aa).

Residues 6–259 (IRNLTIEFKT…PHHPYTQALI (254 aa)) form the ABC transporter domain. 40 to 47 (GESGSGKS) contributes to the ATP binding site.

This sequence belongs to the ABC transporter superfamily.

It is found in the cell inner membrane. In terms of biological role, involved in a peptide intake transport system that plays a role in the resistance to antimicrobial peptides. The protein is Peptide transport system ATP-binding protein SapD (sapD) of Escherichia coli O157:H7.